The sequence spans 360 residues: uncharacterized protein (360 aa).

Solcar repeat units follow at residues 34-153, 172-256, and 266-355; these read VGVL…LSVW, PDWS…FKTN, and NPFV…FKFL. Helical transmembrane passes span 40 to 60, 125 to 145, 178 to 198, 225 to 247, 269 to 289, and 327 to 348; these read VSASSSGAIVTSLFMTPLDVV, LWSGLSPTMVMALPATVFYFT, AVAGIVARTIAVTVVSPIEMI, ISSFYLGWTPTMLRDIPFSGIYW, VVSFVSGAAAGVVASIFTHPF, and FSSGLVPRLVKVSPSCAIMISF.

The protein belongs to the mitochondrial carrier (TC 2.A.29) family.

The protein localises to the mitochondrion inner membrane. This is an uncharacterized protein from Caenorhabditis elegans.